Consider the following 243-residue polypeptide: Transcription factor TFIIS homolog (243 aa).

The TFIIS central domain occupies 77–201 (MRDIIQMMFF…SQQKVAEKTS (125 aa)). Residues 202 to 242 (QLYKCPNCKQRMCTYREVQTRALDEPSTIFCTCKKCGHEFI) form a TFIIS-type zinc finger. 4 residues coordinate Zn(2+): cysteine 206, cysteine 209, cysteine 234, and cysteine 237.

The protein belongs to the TFS-II family.

Functionally, putative initiation factor. Necessary for efficient transcription elongation past template-encoded arresting sites. This is Transcription factor TFIIS homolog from Ornithodoros (relapsing fever ticks).